Consider the following 179-residue polypeptide: MRYSTISSKYVNALLMVGKKVNKIEDYGELLKALCDVYVQFKDFFDNPAVKVWKKVETIKESFGTSIDKVFVNFVSLVFENKRQKFIPQIAAYYRYASIDVENKILVNVTTAEKLSSEELRAISEFVKKCVNRVPVIEEKIDESLIAGAVIEFSGKMIDVSVSGRLNKIAREVFSLRKG.

The protein belongs to the ATPase delta chain family. In terms of assembly, F-type ATPases have 2 components, F(1) - the catalytic core - and F(0) - the membrane proton channel. F(1) has five subunits: alpha(3), beta(3), gamma(1), delta(1), epsilon(1). F(0) has three main subunits: a(1), b(2) and c(10-14). The alpha and beta chains form an alternating ring which encloses part of the gamma chain. F(1) is attached to F(0) by a central stalk formed by the gamma and epsilon chains, while a peripheral stalk is formed by the delta and b chains.

Its subcellular location is the cell inner membrane. F(1)F(0) ATP synthase produces ATP from ADP in the presence of a proton or sodium gradient. F-type ATPases consist of two structural domains, F(1) containing the extramembraneous catalytic core and F(0) containing the membrane proton channel, linked together by a central stalk and a peripheral stalk. During catalysis, ATP synthesis in the catalytic domain of F(1) is coupled via a rotary mechanism of the central stalk subunits to proton translocation. Functionally, this protein is part of the stalk that links CF(0) to CF(1). It either transmits conformational changes from CF(0) to CF(1) or is implicated in proton conduction. This chain is ATP synthase subunit delta, found in Thermosipho melanesiensis (strain DSM 12029 / CIP 104789 / BI429).